The following is a 246-amino-acid chain: Large ribosomal subunit protein uL2 (246 aa).

The tract at residues 197–227 (SPYAHPHGGGSHQKGGTPVPKTAPPGQKVGF) is disordered.

This sequence belongs to the universal ribosomal protein uL2 family. As to quaternary structure, part of the 50S ribosomal subunit. Forms a bridge to the 30S subunit in the 70S ribosome.

One of the primary rRNA binding proteins. Required for association of the 30S and 50S subunits to form the 70S ribosome, for tRNA binding and peptide bond formation. It has been suggested to have peptidyltransferase activity; this is somewhat controversial. Makes several contacts with the 16S rRNA in the 70S ribosome. This chain is Large ribosomal subunit protein uL2, found in Pyrobaculum aerophilum (strain ATCC 51768 / DSM 7523 / JCM 9630 / CIP 104966 / NBRC 100827 / IM2).